A 394-amino-acid chain; its full sequence is Phosphopentomutase (394 aa).

Aspartate 13, aspartate 286, histidine 291, aspartate 327, histidine 328, and histidine 339 together coordinate Mn(2+).

This sequence belongs to the phosphopentomutase family. Mn(2+) serves as cofactor.

Its subcellular location is the cytoplasm. The catalysed reaction is 2-deoxy-alpha-D-ribose 1-phosphate = 2-deoxy-D-ribose 5-phosphate. It catalyses the reaction alpha-D-ribose 1-phosphate = D-ribose 5-phosphate. It participates in carbohydrate degradation; 2-deoxy-D-ribose 1-phosphate degradation; D-glyceraldehyde 3-phosphate and acetaldehyde from 2-deoxy-alpha-D-ribose 1-phosphate: step 1/2. Functionally, isomerase that catalyzes the conversion of deoxy-ribose 1-phosphate (dRib-1-P) and ribose 1-phosphate (Rib-1-P) to deoxy-ribose 5-phosphate (dRib-5-P) and ribose 5-phosphate (Rib-5-P), respectively. The polypeptide is Phosphopentomutase (Bacillus mycoides (strain KBAB4) (Bacillus weihenstephanensis)).